A 119-amino-acid chain; its full sequence is MACFVVVALLVLLSLSGLEAIQHAPKIQVYSRHPAENGKPNFLNCYVSGFHPSDIEVDLLKNGKKIEKVEHSDLSFSKDWSFYLLYYTEFTPNEKDEYACRVSHVTFSTPKTVKWDRNL.

The N-terminal stretch at 1-20 (MACFVVVALLVLLSLSGLEA) is a signal peptide. Residues 25 to 114 (PKIQVYSRHP…VTFSTPKTVK (90 aa)) enclose the Ig-like C1-type domain. Cysteines 45 and 100 form a disulfide.

Belongs to the beta-2-microglobulin family. Heterodimer of an alpha chain and a beta chain. Beta-2-microglobulin is the beta-chain of major histocompatibility complex class I molecules.

It localises to the secreted. Component of the class I major histocompatibility complex (MHC). Involved in the presentation of peptide antigens to the immune system. The protein is Beta-2-microglobulin (B2M) of Leontopithecus chrysopygus (Golden-rumped lion tamarin).